Consider the following 118-residue polypeptide: Large ribosomal subunit protein bL19 (118 aa).

Belongs to the bacterial ribosomal protein bL19 family.

Its function is as follows. This protein is located at the 30S-50S ribosomal subunit interface and may play a role in the structure and function of the aminoacyl-tRNA binding site. In Hahella chejuensis (strain KCTC 2396), this protein is Large ribosomal subunit protein bL19.